The chain runs to 353 residues: MVQRQQTALVGTHDGGIRLSSTETIPDIAGDSVLIKTKAVSVNPVDTKMIGPYVTPGAVAGFDFAGVVEMVGPDATKCDIRVGDRVCTAIMGMNPLDPTVGAFAEYTAAVEWILLKIPPSLSFQEGASLGISFMTTGLALFKSLGLPGNPLSPATEKLPVLVYGGSSATGTAAIQLVRLAGFAPITTCSPRNFELVKSYGASAVFDYNDPNCISDIKKHTKNNIRYALDCISTTQSMQFCYQAIGRAGGKYTALEPYSEAVARTRKMVKPDWIMGPQMLGKEIRWPEPHWRPANAEMGEFGVYWTAVLNKLLENDLIRPHAIVVREGGLEKVLDGIEDIRAKKISGKKLVFTL.

45–48 (VDTK) contacts NADP(+). 131-138 (ISFMTTGL) contacts substrate. Residues 166 to 169 (SSAT), 189 to 192 (SPRN), Tyr-207, and 254 to 255 (LE) contribute to the NADP(+) site. 275-279 (GPQML) lines the substrate pocket. 344–345 (IS) lines the NADP(+) pocket.

This sequence belongs to the zinc-containing alcohol dehydrogenase family. As to quaternary structure, monomer.

The enzyme catalyses L-serine + 7 malonyl-CoA + acetyl-CoA + 2 S-adenosyl-L-methionine + ATP + 8 NADPH + 11 H(+) = (5S)-3-[(2E,6R,8E,10E,12E)-2,6-dimethyltetradeca-2,8,10,12-tetraenoyl]-5-(hydroxymethyl)pyrrolidine-2,4-dione + AMP + 2 S-adenosyl-L-homocysteine + 7 CO2 + diphosphate + 8 NADP(+) + 8 CoA + 6 H2O. It functions in the pathway mycotoxin biosynthesis. Functionally, trans-enoyl reductase; part of the gene cluster that mediates the biosynthesis of equisetin, a trans-fused decalin-containing tetramic acid with antimicrobial activity. The PKS module of eqxS together with the enoylreductase eqxC catalyze the formation of the polyketide unit which is then conjugated to L-serine by the condensation domain of the eqxS NRPS module. Activity of the Dieckmann cyclase domain (RED) results in release of the Dieckmann product intermediate. Diels-Alderase eqx3 is involved in endo-selective Diels-Alder cycloaddition to form the decalin ring, leading to the production of N-desmethylequisetin also called trichosetin. Subsequent N-methylation is carried out by eqxD to give equisetin. This is Trans-enoyl reductase eqxC from Fusarium heterosporum.